Reading from the N-terminus, the 293-residue chain is 4-hydroxy-tetrahydrodipicolinate synthase (293 aa).

Position 45 (serine 45) interacts with pyruvate. Residue tyrosine 133 is the Proton donor/acceptor of the active site. The active-site Schiff-base intermediate with substrate is the lysine 161. A pyruvate-binding site is contributed by isoleucine 203.

This sequence belongs to the DapA family. Homotetramer; dimer of dimers.

The protein resides in the cytoplasm. It catalyses the reaction L-aspartate 4-semialdehyde + pyruvate = (2S,4S)-4-hydroxy-2,3,4,5-tetrahydrodipicolinate + H2O + H(+). It participates in amino-acid biosynthesis; L-lysine biosynthesis via DAP pathway; (S)-tetrahydrodipicolinate from L-aspartate: step 3/4. In terms of biological role, catalyzes the condensation of (S)-aspartate-beta-semialdehyde [(S)-ASA] and pyruvate to 4-hydroxy-tetrahydrodipicolinate (HTPA). The sequence is that of 4-hydroxy-tetrahydrodipicolinate synthase from Psychromonas ingrahamii (strain DSM 17664 / CCUG 51855 / 37).